The sequence spans 348 residues: Mannonate dehydratase (348 aa).

This sequence belongs to the mannonate dehydratase family. Requires Fe(2+) as cofactor. The cofactor is Mn(2+).

The enzyme catalyses D-mannonate = 2-dehydro-3-deoxy-D-gluconate + H2O. It participates in carbohydrate metabolism; pentose and glucuronate interconversion. In terms of biological role, catalyzes the dehydration of D-mannonate. This Streptococcus agalactiae serotype III (strain NEM316) protein is Mannonate dehydratase.